The following is a 200-amino-acid chain: Potassium-transporting ATPase KdpC subunit (200 aa).

The chain crosses the membrane as a helical span at residues 9 to 31; it reads LVMLVALTALTGLVYPLAMTGVA. A disordered region spans residues 68 to 97; the sequence is GRPSATTAPDPQDSSKTVPSPYNAANSMGA. The span at 71–96 shows a compositional bias: polar residues; the sequence is SATTAPDPQDSSKTVPSPYNAANSMG.

Belongs to the KdpC family. As to quaternary structure, the system is composed of three essential subunits: KdpA, KdpB and KdpC.

The protein resides in the cell inner membrane. Part of the high-affinity ATP-driven potassium transport (or Kdp) system, which catalyzes the hydrolysis of ATP coupled with the electrogenic transport of potassium into the cytoplasm. This subunit acts as a catalytic chaperone that increases the ATP-binding affinity of the ATP-hydrolyzing subunit KdpB by the formation of a transient KdpB/KdpC/ATP ternary complex. This is Potassium-transporting ATPase KdpC subunit from Rhodopseudomonas palustris (strain BisA53).